A 102-amino-acid chain; its full sequence is Small ribosomal subunit protein uS10 (102 aa).

It belongs to the universal ribosomal protein uS10 family. As to quaternary structure, part of the 30S ribosomal subunit.

In terms of biological role, involved in the binding of tRNA to the ribosomes. The polypeptide is Small ribosomal subunit protein uS10 (Streptococcus pneumoniae (strain CGSP14)).